A 519-amino-acid chain; its full sequence is Protein disulfide-isomerase A5 (519 aa).

The signal sequence occupies residues 1-21; that stretch reads MARAGPAWLLLAIWVVLPSWL. 4 disulfides stabilise this stretch: Cys-85–Cys-94, Cys-182–Cys-185, Cys-305–Cys-308, and Cys-426–Cys-429. 3 consecutive Thioredoxin domains span residues 134–261, 270–384, and 378–506; these read FLKD…NPQP, PWAD…NPEA, and WMQN…ALRE. A Prevents secretion from ER motif is present at residues 516 to 519; sequence KEEL.

The protein belongs to the protein disulfide isomerase family. As to quaternary structure, interacts with CALR (via P-domain).

The protein localises to the endoplasmic reticulum lumen. The enzyme catalyses Catalyzes the rearrangement of -S-S- bonds in proteins.. The polypeptide is Protein disulfide-isomerase A5 (PDIA5) (Homo sapiens (Human)).